Reading from the N-terminus, the 221-residue chain is Thiamine-phosphate synthase (221 aa).

4-amino-2-methyl-5-(diphosphooxymethyl)pyrimidine is bound by residues 39 to 43 (QLRCK) and Asn-76. 2 residues coordinate Mg(2+): Asp-77 and Asp-96. Ser-114 lines the 4-amino-2-methyl-5-(diphosphooxymethyl)pyrimidine pocket. 140–142 (TPT) contributes to the 2-[(2R,5Z)-2-carboxy-4-methylthiazol-5(2H)-ylidene]ethyl phosphate binding site. Lys-143 provides a ligand contact to 4-amino-2-methyl-5-(diphosphooxymethyl)pyrimidine. Residue Gly-171 coordinates 2-[(2R,5Z)-2-carboxy-4-methylthiazol-5(2H)-ylidene]ethyl phosphate.

Belongs to the thiamine-phosphate synthase family. Mg(2+) serves as cofactor.

It catalyses the reaction 2-[(2R,5Z)-2-carboxy-4-methylthiazol-5(2H)-ylidene]ethyl phosphate + 4-amino-2-methyl-5-(diphosphooxymethyl)pyrimidine + 2 H(+) = thiamine phosphate + CO2 + diphosphate. It carries out the reaction 2-(2-carboxy-4-methylthiazol-5-yl)ethyl phosphate + 4-amino-2-methyl-5-(diphosphooxymethyl)pyrimidine + 2 H(+) = thiamine phosphate + CO2 + diphosphate. The enzyme catalyses 4-methyl-5-(2-phosphooxyethyl)-thiazole + 4-amino-2-methyl-5-(diphosphooxymethyl)pyrimidine + H(+) = thiamine phosphate + diphosphate. It participates in cofactor biosynthesis; thiamine diphosphate biosynthesis; thiamine phosphate from 4-amino-2-methyl-5-diphosphomethylpyrimidine and 4-methyl-5-(2-phosphoethyl)-thiazole: step 1/1. In terms of biological role, condenses 4-methyl-5-(beta-hydroxyethyl)thiazole monophosphate (THZ-P) and 2-methyl-4-amino-5-hydroxymethyl pyrimidine pyrophosphate (HMP-PP) to form thiamine monophosphate (TMP). This chain is Thiamine-phosphate synthase, found in Deinococcus geothermalis (strain DSM 11300 / CIP 105573 / AG-3a).